The following is a 435-amino-acid chain: Trigger factor (435 aa).

The 86-residue stretch at 164-249 (GDFAKFDFEG…LHEIQGKKAG (86 aa)) folds into the PPIase FKBP-type domain.

This sequence belongs to the FKBP-type PPIase family. Tig subfamily.

It localises to the cytoplasm. It carries out the reaction [protein]-peptidylproline (omega=180) = [protein]-peptidylproline (omega=0). In terms of biological role, involved in protein export. Acts as a chaperone by maintaining the newly synthesized protein in an open conformation. Functions as a peptidyl-prolyl cis-trans isomerase. The chain is Trigger factor from Campylobacter fetus subsp. fetus (strain 82-40).